Reading from the N-terminus, the 86-residue chain is MERKQRRTLVGRVVSDKMDKTITVVVETKRNHPVYGKRINYSKKYKAHDENNIAKAGDIVRIMETRPLSATKRFRLVEVVEEAVII.

Belongs to the universal ribosomal protein uS17 family. Part of the 30S ribosomal subunit.

One of the primary rRNA binding proteins, it binds specifically to the 5'-end of 16S ribosomal RNA. The protein is Small ribosomal subunit protein uS17 of Streptococcus mutans serotype c (strain ATCC 700610 / UA159).